Reading from the N-terminus, the 450-residue chain is tRNA modification GTPase MnmE (450 aa).

3 residues coordinate (6S)-5-formyl-5,6,7,8-tetrahydrofolate: Arg20, Glu78, and Lys117. Positions 211-372 (GFRMVIVGKP…LEEAIYRETQ (162 aa)) constitute a TrmE-type G domain. Asn221 contributes to the K(+) binding site. GTP contacts are provided by residues 221 to 226 (NVGKST), 240 to 246 (TDIPGTT), and 265 to 268 (DTAG). Ser225 contributes to the Mg(2+) binding site. K(+) contacts are provided by Thr240, Ile242, and Thr245. Residue Thr246 coordinates Mg(2+). Lys450 serves as a coordination point for (6S)-5-formyl-5,6,7,8-tetrahydrofolate.

Belongs to the TRAFAC class TrmE-Era-EngA-EngB-Septin-like GTPase superfamily. TrmE GTPase family. In terms of assembly, homodimer. Heterotetramer of two MnmE and two MnmG subunits. K(+) serves as cofactor.

The protein localises to the cytoplasm. Its function is as follows. Exhibits a very high intrinsic GTPase hydrolysis rate. Involved in the addition of a carboxymethylaminomethyl (cmnm) group at the wobble position (U34) of certain tRNAs, forming tRNA-cmnm(5)s(2)U34. This Thermotoga petrophila (strain ATCC BAA-488 / DSM 13995 / JCM 10881 / RKU-1) protein is tRNA modification GTPase MnmE.